The primary structure comprises 42 residues: Cytochrome b559 subunit beta (42 aa).

Residues 17-33 form a helical membrane-spanning segment; that stretch reads WLAIHAIGIPAVFFIGS. His-21 contributes to the heme binding site.

This sequence belongs to the PsbE/PsbF family. Heterodimer of an alpha subunit and a beta subunit. PSII is composed of 1 copy each of membrane proteins PsbA, PsbB, PsbC, PsbD, PsbE, PsbF, PsbH, PsbI, PsbJ, PsbK, PsbL, PsbM, PsbT, PsbX, PsbY, PsbZ, Psb30/Ycf12, at least 3 peripheral proteins of the oxygen-evolving complex and a large number of cofactors. It forms dimeric complexes. Requires heme b as cofactor.

Its subcellular location is the plastid. It localises to the cyanelle thylakoid membrane. In terms of biological role, this b-type cytochrome is tightly associated with the reaction center of photosystem II (PSII). PSII is a light-driven water:plastoquinone oxidoreductase that uses light energy to abstract electrons from H(2)O, generating O(2) and a proton gradient subsequently used for ATP formation. It consists of a core antenna complex that captures photons, and an electron transfer chain that converts photonic excitation into a charge separation. This chain is Cytochrome b559 subunit beta, found in Cyanophora paradoxa.